Here is a 449-residue protein sequence, read N- to C-terminus: Capsid protein (449 aa).

The tract at residues 1-43 is DNA-binding; the sequence is MARRARRPRGRFYAFRRGRWHHLKRLRRRYKFRHRRRQRYRRR. The nuclear localization signals stretch occupies residues 6 to 47; the sequence is RRPRGRFYAFRRGRWHHLKRLRRRYKFRHRRRQRYRRRAFRK.

Belongs to the gyrovirus capsid protein family. Homomultimer (Potential). Interacts with Rep; this interaction relocates Rep into the nucleus.

It is found in the host nucleus. The protein resides in the virion. Its function is as follows. Self-assembles to form the virion icosahedral capsid with a T=1 symmetry. This very small capsid (25 nm in diameter) allows the virus to be very stable in the environment and resistant to some disinfectants, including detergents. Essential for the initial attachment to host receptors. After attachment, the virus is endocytosed and traffics to the nucleus. The capsid protein binds and transports the viral genome and Rep across the nuclear envelope. The chain is Capsid protein (VP1) from Gallus gallus (Chicken).